The chain runs to 122 residues: Small ribosomal subunit protein uS13 (122 aa).

The disordered stretch occupies residues 93–122 (RRGLPVRGQKTKTNARTRKGPKKTIANKKK).

Belongs to the universal ribosomal protein uS13 family. Part of the 30S ribosomal subunit. Forms a loose heterodimer with protein S19. Forms two bridges to the 50S subunit in the 70S ribosome.

Located at the top of the head of the 30S subunit, it contacts several helices of the 16S rRNA. In the 70S ribosome it contacts the 23S rRNA (bridge B1a) and protein L5 of the 50S subunit (bridge B1b), connecting the 2 subunits; these bridges are implicated in subunit movement. Contacts the tRNAs in the A and P-sites. The protein is Small ribosomal subunit protein uS13 of Clostridium beijerinckii (strain ATCC 51743 / NCIMB 8052) (Clostridium acetobutylicum).